We begin with the raw amino-acid sequence, 357 residues long: MGDHNLPDFQTCLKFSVTAKKSFLCMYRDSVSKEKLASSMPSTCDIQLKRAINDAYPGGGIKVTVLNSTTASLDSLATTHVKEFEIVIIPDINSLLQPDQAKLVKIMRDCTVAIEKAQSTRIFIGVVHWNNPVQPSGAAKDGDEAGKPAPKTRIFLPTSLRMGAWLKHKFWFACAPPYLDFESSTESSINTRANNSIGMAEEEKQEPESKRSIILNEEANLNDVFVGSTVRRYILDIMVHLRTHRLTYNAKAGGVYTNSLDDVVLLSRLIGLHSGKMFVSPSHVKEASRWYFPMHLELVQRSSMDSSLLYGSDPNLVDEMLEKLAKIKCEEVNEFENPLFLESLVVKNVLSKVVPPV.

Belongs to the MTC2 family.

Functionally, may be involved in telomere capping. This is Maintenance of telomere capping protein 2 (MTC2) from Saccharomyces cerevisiae (strain JAY291) (Baker's yeast).